The following is a 1503-amino-acid chain: E3 ubiquitin-protein ligase listerin (1503 aa).

14 HEAT repeats span residues serine 52–serine 89, cysteine 93–lysine 129, lysine 133–lysine 170, leucine 280–phenylalanine 318, serine 323–valine 345, leucine 346–tryptophan 384, glycine 552–serine 589, alanine 640–glutamate 663, lysine 664–serine 700, leucine 845–serine 882, threonine 1022–arginine 1065, arginine 1078–glutamate 1117, alanine 1141–serine 1183, and phenylalanine 1302–isoleucine 1340. The segment at cysteine 1446–arginine 1499 adopts an RING-type zinc-finger fold.

The protein belongs to the LTN1 family. Component of the ribosome quality control complex (RQC), composed of at least the E3 ubiquitin ligase ltn1 and nemf. The complex probably also contains tcf25 as well as vcp/p97 and its ubiquitin-binding cofactors. RQC forms a stable complex with 60S ribosomal subunits.

The protein localises to the cytoplasm. It localises to the cytosol. It carries out the reaction S-ubiquitinyl-[E2 ubiquitin-conjugating enzyme]-L-cysteine + [acceptor protein]-L-lysine = [E2 ubiquitin-conjugating enzyme]-L-cysteine + N(6)-ubiquitinyl-[acceptor protein]-L-lysine.. It participates in protein modification; protein ubiquitination. In terms of biological role, E3 ubiquitin-protein ligase. Component of the ribosome quality control complex (RQC), a ribosome-associated complex that mediates ubiquitination and extraction of incompletely synthesized nascent chains for proteasomal degradation. Ubiquitination leads to vcp/p97 recruitment for extraction and degradation of the incomplete translation product. The sequence is that of E3 ubiquitin-protein ligase listerin from Caenorhabditis briggsae.